A 421-amino-acid polypeptide reads, in one-letter code: 4-aminobutyrate aminotransferase PuuE (421 aa).

Pyridoxal 5'-phosphate is bound by residues 110–111 (GA) and 238–241 (DEVQ). An N6-(pyridoxal phosphate)lysine modification is found at Lys267. Thr296 is a binding site for pyridoxal 5'-phosphate.

This sequence belongs to the class-III pyridoxal-phosphate-dependent aminotransferase family. The cofactor is pyridoxal 5'-phosphate.

It carries out the reaction 4-aminobutanoate + 2-oxoglutarate = succinate semialdehyde + L-glutamate. Its pathway is amine and polyamine degradation; putrescine degradation; succinate semialdehyde from 4-aminobutanoate. Its activity is regulated as follows. Completely inhibited by succinate and low-aeration conditions. Catalyzes the transfer of the amino group from gamma-aminobutyrate (GABA) to alpha-ketoglutarate (KG) to yield succinic semialdehyde (SSA). PuuE is important for utilization of putrescine as the sole nitrogen or carbon source. This chain is 4-aminobutyrate aminotransferase PuuE (puuE), found in Escherichia coli (strain K12).